The following is a 456-amino-acid chain: Bifunctional protein GlmU (456 aa).

The interval 1-228 (MPQNTLNIVI…SHLAAGVNNK (228 aa)) is pyrophosphorylase. Residues 11 to 14 (LAAG), Lys-25, Gln-75, 80 to 81 (GT), 102 to 104 (YGD), Gly-138, Glu-153, Asn-168, and Asn-226 contribute to the UDP-N-acetyl-alpha-D-glucosamine site. Residue Asp-104 coordinates Mg(2+). Asn-226 serves as a coordination point for Mg(2+). The linker stretch occupies residues 229-249 (LQLAELERIFQTEQAQELLKA). Residues 250–456 (GVTLRDPARF…GWVRPEKNKQ (207 aa)) are N-acetyltransferase. Residues Arg-332 and Lys-350 each contribute to the UDP-N-acetyl-alpha-D-glucosamine site. His-362 serves as the catalytic Proton acceptor. UDP-N-acetyl-alpha-D-glucosamine-binding residues include Tyr-365 and Asn-376. Acetyl-CoA is bound by residues Ala-379, 385-386 (NY), Ser-404, Ala-422, and Arg-439.

In the N-terminal section; belongs to the N-acetylglucosamine-1-phosphate uridyltransferase family. The protein in the C-terminal section; belongs to the transferase hexapeptide repeat family. As to quaternary structure, homotrimer. Mg(2+) serves as cofactor.

The protein resides in the cytoplasm. It catalyses the reaction alpha-D-glucosamine 1-phosphate + acetyl-CoA = N-acetyl-alpha-D-glucosamine 1-phosphate + CoA + H(+). It carries out the reaction N-acetyl-alpha-D-glucosamine 1-phosphate + UTP + H(+) = UDP-N-acetyl-alpha-D-glucosamine + diphosphate. It functions in the pathway nucleotide-sugar biosynthesis; UDP-N-acetyl-alpha-D-glucosamine biosynthesis; N-acetyl-alpha-D-glucosamine 1-phosphate from alpha-D-glucosamine 6-phosphate (route II): step 2/2. Its pathway is nucleotide-sugar biosynthesis; UDP-N-acetyl-alpha-D-glucosamine biosynthesis; UDP-N-acetyl-alpha-D-glucosamine from N-acetyl-alpha-D-glucosamine 1-phosphate: step 1/1. The protein operates within bacterial outer membrane biogenesis; LPS lipid A biosynthesis. In terms of biological role, catalyzes the last two sequential reactions in the de novo biosynthetic pathway for UDP-N-acetylglucosamine (UDP-GlcNAc). The C-terminal domain catalyzes the transfer of acetyl group from acetyl coenzyme A to glucosamine-1-phosphate (GlcN-1-P) to produce N-acetylglucosamine-1-phosphate (GlcNAc-1-P), which is converted into UDP-GlcNAc by the transfer of uridine 5-monophosphate (from uridine 5-triphosphate), a reaction catalyzed by the N-terminal domain. This Neisseria meningitidis serogroup A / serotype 4A (strain DSM 15465 / Z2491) protein is Bifunctional protein GlmU.